Here is a 142-residue protein sequence, read N- to C-terminus: Large ribosomal subunit protein uL11 (142 aa).

This sequence belongs to the universal ribosomal protein uL11 family. In terms of assembly, part of the ribosomal stalk of the 50S ribosomal subunit. Interacts with L10 and the large rRNA to form the base of the stalk. L10 forms an elongated spine to which L12 dimers bind in a sequential fashion forming a multimeric L10(L12)X complex. Post-translationally, one or more lysine residues are methylated.

Forms part of the ribosomal stalk which helps the ribosome interact with GTP-bound translation factors. This chain is Large ribosomal subunit protein uL11, found in Mycobacteroides abscessus (strain ATCC 19977 / DSM 44196 / CCUG 20993 / CIP 104536 / JCM 13569 / NCTC 13031 / TMC 1543 / L948) (Mycobacterium abscessus).